The chain runs to 397 residues: Guanine nucleotide-binding protein G(s) subunit alpha (397 aa).

Positions 1–23 (MGCLGNSKTEDQRNEEKAQREAN) are disordered. Gly2 carries N-palmitoyl glycine lipidation. Cys3 carries the S-palmitoyl cysteine lipid modification. The segment covering 8–23 (KTEDQRNEEKAQREAN) has biased composition (basic and acidic residues). Residues 39–397 (ATHRLLLLGA…RMHLRQYELL (359 aa)) enclose the G-alpha domain. The segment at 42–55 (RLLLLGAGESGKST) is G1 motif. GTP is bound by residues 47 to 55 (GAGESGKST), 182 to 189 (LLRCRVLT), 208 to 212 (DVGGQ), 277 to 280 (NKQD), and Ala369. Residues Ser54 and Thr189 each contribute to the Mg(2+) site. The segment at 181 to 189 (DLLRCRVLT) is G2 motif. The G3 motif stretch occupies residues 204–213 (FHMFDVGGQR). The interval 273-280 (ILFLNKQD) is G4 motif. The G5 motif stretch occupies residues 367-372 (TCAVDT).

The protein belongs to the G-alpha family. G(s) subfamily. Heterotrimeric G proteins are composed of 3 units; alpha, beta and gamma. The alpha chain contains the guanine nucleotide binding site. Interacts with CRY1; the interaction may block GPCR-mediated regulation of cAMP concentrations. Interacts with ADCY6 and stimulates its adenylyl cyclase activity. Interacts with ADCY2 and ADCY5. Stimulates the ADCY5 adenylyl cyclase activity. Interaction with SASH1.

The protein resides in the cell membrane. Functionally, guanine nucleotide-binding proteins (G proteins) function as transducers in numerous signaling pathways controlled by G protein-coupled receptors (GPCRs). Signaling involves the activation of adenylyl cyclases, resulting in increased levels of the signaling molecule cAMP. GNAS functions downstream of several GPCRs, including beta-adrenergic receptors. Stimulates the Ras signaling pathway via RAPGEF2. In Sus scrofa (Pig), this protein is Guanine nucleotide-binding protein G(s) subunit alpha (GNAS).